A 910-amino-acid polypeptide reads, in one-letter code: Eukaryotic translation initiation factor 3 subunit C (910 aa).

A disordered region spans residues 1-21 (MSRFFANGSDSESESSEDEIQ). Residues 11–20 (SESESSEDEI) show a composition bias toward acidic residues. Phosphoserine is present on residues S34, S165, S176, and S185. The segment at 157-281 (FREAPDQESE…KRAEDDEDGE (125 aa)) is disordered. A compositionally biased stretch (acidic residues) spans 162 to 186 (DQESEAEDEVVAQESDGGDAGDDSD). Over residues 193-207 (EAAPKAVKSAPAKAA) the composition is skewed to low complexity. Residues 209 to 235 (ADDDDSDDSIDWDSDSESETESSDDEN) show a composition bias toward acidic residues. Residues 240–268 (MRERFLKRTTEKEEKDDDKRKDKRKEQKV) show a composition bias toward basic and acidic residues. Residues 639–815 (FHMHINLELL…ETVVMHRSEP (177 aa)) form the PCI domain. The tract at residues 847 to 910 (FFQRGNMGNR…QQQVQTIDEE (64 aa)) is disordered. Over residues 862–874 (NRNQNNQGGNWLG) the composition is skewed to low complexity. Over residues 882 to 891 (RNRNQRGHHK) the composition is skewed to basic residues. Residues 895–910 (DRQQQQQQQVQTIDEE) show a composition bias toward low complexity.

Belongs to the eIF-3 subunit C family. As to quaternary structure, component of the eukaryotic translation initiation factor 3 (eIF-3) complex. The eIF-3 complex interacts with pix.

It is found in the cytoplasm. Its function is as follows. Component of the eukaryotic translation initiation factor 3 (eIF-3) complex, which is involved in protein synthesis of a specialized repertoire of mRNAs and, together with other initiation factors, stimulates binding of mRNA and methionyl-tRNAi to the 40S ribosome. The eIF-3 complex specifically targets and initiates translation of a subset of mRNAs involved in cell proliferation. The protein is Eukaryotic translation initiation factor 3 subunit C of Drosophila yakuba (Fruit fly).